Reading from the N-terminus, the 650-residue chain is Chaperone protein DnaK (650 aa).

Thr200 is modified (phosphothreonine; by autocatalysis). A compositionally biased stretch (low complexity) spans 611-634; that stretch reads AQQAGAAGAAGAAAEGASAQGGAQ. A disordered region spans residues 611–650; it reads AQQAGAAGAAGAAAEGASAQGGAQPPDDVVDADFKEVKKD.

It belongs to the heat shock protein 70 family.

In terms of biological role, acts as a chaperone. This is Chaperone protein DnaK from Burkholderia pseudomallei (strain 1710b).